A 289-amino-acid chain; its full sequence is Oxaloacetate decarboxylase (289 aa).

Position 50 (Ser-50) interacts with substrate. A Mg(2+)-binding site is contributed by Asp-88. Substrate is bound by residues Arg-159 and His-235.

The protein belongs to the isocitrate lyase/PEP mutase superfamily. Oxaloacetate decarboxylase family. As to quaternary structure, homotetramer; dimer of dimers. Mg(2+) is required as a cofactor.

The catalysed reaction is oxaloacetate + H(+) = pyruvate + CO2. Functionally, catalyzes the decarboxylation of oxaloacetate into pyruvate. Seems to play a role in maintaining cellular concentrations of bicarbonate and pyruvate. In Pseudomonas putida (strain GB-1), this protein is Oxaloacetate decarboxylase.